Here is a 711-residue protein sequence, read N- to C-terminus: Polyribonucleotide nucleotidyltransferase (711 aa).

Asp-486 and Asp-492 together coordinate Mg(2+). The region spanning 553 to 612 (PRIHTIKINPDKIKDVIGKGGSVIRALTEETGTTIEIEDDGTVKIAATDGEKAKHAIRRI) is the KH domain. The region spanning 622–690 (GRVYTGKVTR…RQGRIRLSIK (69 aa)) is the S1 motif domain. Residues 689-711 (IKEATEQSQPAAAPEAPAAEQGE) form a disordered region. A compositionally biased stretch (low complexity) spans 694–711 (EQSQPAAAPEAPAAEQGE).

This sequence belongs to the polyribonucleotide nucleotidyltransferase family. In terms of assembly, component of the RNA degradosome, which is a multiprotein complex involved in RNA processing and mRNA degradation. The cofactor is Mg(2+).

The protein localises to the cytoplasm. The enzyme catalyses RNA(n+1) + phosphate = RNA(n) + a ribonucleoside 5'-diphosphate. Involved in mRNA degradation. Catalyzes the phosphorolysis of single-stranded polyribonucleotides processively in the 3'- to 5'-direction. This is Polyribonucleotide nucleotidyltransferase from Escherichia coli (strain ATCC 8739 / DSM 1576 / NBRC 3972 / NCIMB 8545 / WDCM 00012 / Crooks).